We begin with the raw amino-acid sequence, 420 residues long: Vasopressin V1a receptor (420 aa).

Residues 1–45 (MSFPRGSYDPAASNSSPRWPLSAEDANSSREAAGHQKGSDPSGDV) form a disordered region. The Extracellular segment spans residues 1 to 54 (MSFPRGSYDPAASNSSPRWPLSAEDANSSREAAGHQKGSDPSGDVRNEELAKLE). Asn-27 is a glycosylation site (N-linked (GlcNAc...) asparagine). The span at 32-45 (AAGHQKGSDPSGDV) shows a compositional bias: basic and acidic residues. A helical transmembrane segment spans residues 55–75 (IAVLAVIFVVAVLGNSSVLLA). Over 76–92 (LHRTPRKTSRMHLFIRH) the chain is Cytoplasmic. The helical transmembrane segment at 93–113 (LSLADLAVAFFQVLPQLCWDI) threads the bilayer. Residues 114–125 (TYRFRGPDWLCR) are Extracellular-facing. Cys-124 and Cys-205 are disulfide-bonded. A helical membrane pass occupies residues 126–146 (VVKHLQVFAMFASAYMLVVMT). At 147–168 (ADRYIAVCHPLKTLQQPARRSR) the chain is on the cytoplasmic side. A helical transmembrane segment spans residues 169–189 (LMIAASWVLSFLLSTPQYFIF). Residues 190-225 (SMIEIEVNNGTKTQDCWATFIQPWGTRAYVTWMTSG) lie on the Extracellular side of the membrane. An N-linked (GlcNAc...) asparagine glycan is attached at Asn-198. The helical transmembrane segment at 226-246 (VFVVPVVILGTCYGFICYHIW) threads the bilayer. At 247–294 (RNVRGKTASRQSKGSGEDVAPFHKGLLVTPCVSSVKTISRAKIRTVKM) the chain is on the cytoplasmic side. A helical membrane pass occupies residues 295–315 (TFVIVTAYILCWAPFFIVQMW). Topologically, residues 316–331 (SVWDDNFIWTDSENPS) are extracellular. The helical transmembrane segment at 332–352 (ITITALLASLNSCCNPWIYMF) threads the bilayer. Topologically, residues 353–420 (FSGHLLQDCV…RSIRFIPVST (68 aa)) are cytoplasmic. Residues Cys-367 and Cys-368 are each lipidated (S-palmitoyl cysteine). The tract at residues 379–411 (DSDNMSRRQTSYSNNRSPTNSTGTWKDSPKSSR) is disordered. Residues 385 to 403 (RRQTSYSNNRSPTNSTGTW) are compositionally biased toward polar residues. Ser-406 carries the phosphoserine modification.

The protein belongs to the G-protein coupled receptor 1 family. Vasopressin/oxytocin receptor subfamily.

It localises to the cell membrane. Receptor for arginine vasopressin. The activity of this receptor is mediated by G proteins which activate a phosphatidyl-inositol-calcium second messenger system. Involved in social memory formation. The chain is Vasopressin V1a receptor (Avpr1a) from Microtus montanus (Montane vole).